Consider the following 460-residue polypeptide: Probable carboxylesterase 11 (460 aa).

Polar residues-rich tracts occupy residues 26 to 35 (QSSGDESSSD) and 132 to 145 (NSYGYTTGSSSPEA). Disordered stretches follow at residues 26–52 (QSSGDESSSDPFGVTTRPEESVAAPNP) and 132–161 (NSYGYTTGSSSPEAGSSDVYRGYAPSSSGG). The Involved in the stabilization of the negatively charged intermediate by the formation of the oxyanion hole signature appears at 173-175 (HGG). Active-site residues include Ser289, Asp392, and His422.

This sequence belongs to the 'GDXG' lipolytic enzyme family. As to expression, expressed in roots, leaves, stems, flowers and siliques.

The catalysed reaction is a carboxylic ester + H2O = an alcohol + a carboxylate + H(+). Functionally, carboxylesterase acting on esters with varying acyl chain length. In Arabidopsis thaliana (Mouse-ear cress), this protein is Probable carboxylesterase 11 (CXE11).